The primary structure comprises 214 residues: NAD(P)H-quinone oxidoreductase subunit 5, chloroplastic (214 aa).

Helical transmembrane passes span 84 to 104 and 152 to 172; these read LFPL…GIPF and SLAI…YSFF.

The protein belongs to the complex I subunit 5 family. In terms of assembly, NDH is composed of at least 16 different subunits, 5 of which are encoded in the nucleus.

Its subcellular location is the plastid. The protein localises to the chloroplast thylakoid membrane. The enzyme catalyses a plastoquinone + NADH + (n+1) H(+)(in) = a plastoquinol + NAD(+) + n H(+)(out). It carries out the reaction a plastoquinone + NADPH + (n+1) H(+)(in) = a plastoquinol + NADP(+) + n H(+)(out). Functionally, NDH shuttles electrons from NAD(P)H:plastoquinone, via FMN and iron-sulfur (Fe-S) centers, to quinones in the photosynthetic chain and possibly in a chloroplast respiratory chain. The immediate electron acceptor for the enzyme in this species is believed to be plastoquinone. Couples the redox reaction to proton translocation, and thus conserves the redox energy in a proton gradient. The polypeptide is NAD(P)H-quinone oxidoreductase subunit 5, chloroplastic (ndhF) (Brachypodium pinnatum (Tor grass)).